Reading from the N-terminus, the 140-residue chain is Resuscitation-promoting factor RpfC (140 aa).

The signal sequence occupies residues 1–31 (MTRIAKPLIKSAMAAGLVTASMSLSTAVAHA).

It belongs to the transglycosylase family. Rpf subfamily.

The protein localises to the secreted. Functionally, factor that stimulates resuscitation of dormant cells. Has peptidoglycan (PG) hydrolytic activity. The protein is Resuscitation-promoting factor RpfC (rpfC) of Mycobacterium tuberculosis (strain ATCC 35801 / TMC 107 / Erdman).